A 156-amino-acid chain; its full sequence is Ribosomal RNA large subunit methyltransferase H (156 aa).

S-adenosyl-L-methionine is bound by residues leucine 73, glycine 104, and 123–128; that span reads LSRLTL.

This sequence belongs to the RNA methyltransferase RlmH family. As to quaternary structure, homodimer.

The protein resides in the cytoplasm. It carries out the reaction pseudouridine(1915) in 23S rRNA + S-adenosyl-L-methionine = N(3)-methylpseudouridine(1915) in 23S rRNA + S-adenosyl-L-homocysteine + H(+). In terms of biological role, specifically methylates the pseudouridine at position 1915 (m3Psi1915) in 23S rRNA. The sequence is that of Ribosomal RNA large subunit methyltransferase H from Thiobacillus denitrificans (strain ATCC 25259 / T1).